The sequence spans 224 residues: UPF0758 protein VCM66_0205 (224 aa).

The tract at residues 1-20 (MSLKQLPTESMPREKLLQRG) is disordered. The region spanning 102–224 (ALTSPQQTKL…VVSFAERGWI (123 aa)) is the MPN domain. Zn(2+) contacts are provided by His-173, His-175, and Asp-186. Positions 173-186 (HNHPSGVAEPSQAD) match the JAMM motif motif.

It belongs to the UPF0758 family.

The protein is UPF0758 protein VCM66_0205 of Vibrio cholerae serotype O1 (strain M66-2).